A 397-amino-acid polypeptide reads, in one-letter code: Lysophospholipid transporter LplT (397 aa).

Topologically, residues 1–17 (MSESVHTNTSLWSKGMK) are periplasmic. Residues 18–38 (AVIVAQFLSAFGDNALLFATL) form a helical membrane-spanning segment. The Cytoplasmic portion of the chain corresponds to 39-52 (ALLKAQFYPEWSQP). Residues 53-73 (ILQMVFVGAYILFAPFVGQVA) form a helical membrane-spanning segment. Residues 74–90 (DSFAKGRVMMFANGLKL) lie on the Periplasmic side of the membrane. A helical transmembrane segment spans residues 91-111 (LGAASICFGINPFLGYTLVGV). Residues 112 to 144 (GAAAYSPAKYGILGELTTGSKLVKANGLMEAST) lie on the Cytoplasmic side of the membrane. The helical transmembrane segment at 145 to 165 (IAAILLGSVAGGVLADWHILV) threads the bilayer. Residue A166 is a topological domain, periplasmic. Residues 167–187 (LAACALAYGGAVVANIYIPKL) traverse the membrane as a helical segment. The Cytoplasmic segment spans residues 188–226 (AAARPGQSWNLISMTRSFLNACTSLWRNGETRFSLVGTS). The helical transmembrane segment at 227–247 (LFWGAGVTLRFLLVLWVPVAL) threads the bilayer. At 248–256 (GITDNATPT) the chain is on the periplasmic side. The helical transmembrane segment at 257-277 (YLNAMVAIGIVVGAGAAAKLV) threads the bilayer. At 278–280 (TLE) the chain is on the cytoplasmic side. Residues 281-301 (TVSRCMPAGILIGVVVLIFSL) traverse the membrane as a helical segment. Topologically, residues 302–304 (QHE) are periplasmic. Residues 305–325 (LLPAYALLMLIGVLGGFFVVP) traverse the membrane as a helical segment. The Cytoplasmic segment spans residues 326–343 (LNALLQERGKKSVGAGNA). The chain crosses the membrane as a helical span at residues 344-364 (IAVQNLGENSAMLLMLGIYSL). Residues 365–366 (AV) are Periplasmic-facing. Residues 367 to 387 (MVGIPVVPIGIGFGALFALAI) form a helical membrane-spanning segment. The Cytoplasmic portion of the chain corresponds to 388–397 (TALWIWQRRH).

The protein belongs to the major facilitator superfamily. LplT (TC 2.A.1.42) family.

It localises to the cell inner membrane. Catalyzes the facilitated diffusion of 2-acyl-glycero-3-phosphoethanolamine (2-acyl-GPE) into the cell. In Escherichia coli O6:K15:H31 (strain 536 / UPEC), this protein is Lysophospholipid transporter LplT.